A 419-amino-acid polypeptide reads, in one-letter code: Gamma-glutamyl phosphate reductase (419 aa).

The protein belongs to the gamma-glutamyl phosphate reductase family.

Its subcellular location is the cytoplasm. It catalyses the reaction L-glutamate 5-semialdehyde + phosphate + NADP(+) = L-glutamyl 5-phosphate + NADPH + H(+). It functions in the pathway amino-acid biosynthesis; L-proline biosynthesis; L-glutamate 5-semialdehyde from L-glutamate: step 2/2. Its function is as follows. Catalyzes the NADPH-dependent reduction of L-glutamate 5-phosphate into L-glutamate 5-semialdehyde and phosphate. The product spontaneously undergoes cyclization to form 1-pyrroline-5-carboxylate. The protein is Gamma-glutamyl phosphate reductase of Azobacteroides pseudotrichonymphae genomovar. CFP2.